Consider the following 400-residue polypeptide: Cytohesin-3 (400 aa).

The stretch at 14–61 (EDLSLEEREELLDIRRRKKELIDDIERLKYEIAEVMTEIDNLTSVEES) forms a coiled coil. An SEC7 domain is found at 77-206 (FNMDPKKGIQ…IIMLNTSLHN (130 aa)). The region spanning 265–381 (PDREGWLLKL…WMKSIKASIS (117 aa)) is the PH domain. A 1,2-diacyl-sn-glycero-3-phospho-(1D-myo-inositol-3,4,5-trisphosphate)-binding positions include 273–281 (KLGGGRVKT), arginine 285, tyrosine 296, arginine 306, and asparagine 355. The segment at 392–400 (RKRRIANKK) is C-terminal autoinhibitory region.

Interacts with TAMALIN. In terms of tissue distribution, present in all tissues tested, with highest protein levels in brain and adrenal.

It is found in the cytoplasm. Its subcellular location is the cytosol. The protein localises to the cell membrane. Its function is as follows. Promotes guanine-nucleotide exchange on ARF1. Promotes the activation of ARF factors through replacement of GDP with GTP. The sequence is that of Cytohesin-3 (Cyth3) from Rattus norvegicus (Rat).